The primary structure comprises 160 residues: MGKSHGYRSRTRYMFQRDFRKHGAVHMSTYLKIYKVGDIVDIKANGSIQKGMPHKFYQGKTGVVYNVTKSSVGVIINKMVGNRYLEKRLNLRVEHIKHSKCRQEFLERVKANAAKRAEAKAQGVAVQLKRQPAQPRESRIVSTEGNVPQTLAPVPYETFI.

Lysine 32 is covalently cross-linked (Glycyl lysine isopeptide (Lys-Gly) (interchain with G-Cter in ubiquitin)).

Belongs to the eukaryotic ribosomal protein eL21 family. As to quaternary structure, component of the large ribosomal subunit (LSU). Mature yeast ribosomes consist of a small (40S) and a large (60S) subunit. The 40S small subunit contains 1 molecule of ribosomal RNA (18S rRNA) and 33 different proteins (encoded by 57 genes). The large 60S subunit contains 3 rRNA molecules (25S, 5.8S and 5S rRNA) and 46 different proteins (encoded by 81 genes).

Its subcellular location is the cytoplasm. Component of the ribosome, a large ribonucleoprotein complex responsible for the synthesis of proteins in the cell. The small ribosomal subunit (SSU) binds messenger RNAs (mRNAs) and translates the encoded message by selecting cognate aminoacyl-transfer RNA (tRNA) molecules. The large subunit (LSU) contains the ribosomal catalytic site termed the peptidyl transferase center (PTC), which catalyzes the formation of peptide bonds, thereby polymerizing the amino acids delivered by tRNAs into a polypeptide chain. The nascent polypeptides leave the ribosome through a tunnel in the LSU and interact with protein factors that function in enzymatic processing, targeting, and the membrane insertion of nascent chains at the exit of the ribosomal tunnel. This Saccharomyces cerevisiae (strain ATCC 204508 / S288c) (Baker's yeast) protein is Large ribosomal subunit protein eL21B.